We begin with the raw amino-acid sequence, 136 residues long: Ribosome-binding factor A (136 aa).

It belongs to the RbfA family. Monomer. Binds 30S ribosomal subunits, but not 50S ribosomal subunits or 70S ribosomes.

The protein localises to the cytoplasm. Its function is as follows. One of several proteins that assist in the late maturation steps of the functional core of the 30S ribosomal subunit. Associates with free 30S ribosomal subunits (but not with 30S subunits that are part of 70S ribosomes or polysomes). Required for efficient processing of 16S rRNA. May interact with the 5'-terminal helix region of 16S rRNA. The sequence is that of Ribosome-binding factor A from Cellvibrio japonicus (strain Ueda107) (Pseudomonas fluorescens subsp. cellulosa).